Consider the following 150-residue polypeptide: UPF0178 protein Shewmr4_1560 (150 aa).

The protein belongs to the UPF0178 family.

The chain is UPF0178 protein Shewmr4_1560 from Shewanella sp. (strain MR-4).